Consider the following 197-residue polypeptide: Proteasome subunit beta 1 (197 aa).

Residues 1–6 (MNRKTG) constitute a propeptide, removed in mature form; by autocatalysis. T7 serves as the catalytic Nucleophile.

The protein belongs to the peptidase T1B family. As to quaternary structure, the 20S proteasome core is composed of 14 alpha and 14 beta subunits that assemble into four stacked heptameric rings, resulting in a barrel-shaped structure. The two inner rings, each composed of seven catalytic beta subunits, are sandwiched by two outer rings, each composed of seven alpha subunits. The catalytic chamber with the active sites is on the inside of the barrel. Has a gated structure, the ends of the cylinder being occluded by the N-termini of the alpha-subunits. Is capped at one or both ends by the proteasome regulatory ATPase, PAN.

It is found in the cytoplasm. It catalyses the reaction Cleavage of peptide bonds with very broad specificity.. Its activity is regulated as follows. The formation of the proteasomal ATPase PAN-20S proteasome complex, via the docking of the C-termini of PAN into the intersubunit pockets in the alpha-rings, triggers opening of the gate for substrate entry. Interconversion between the open-gate and close-gate conformations leads to a dynamic regulation of the 20S proteasome proteolysis activity. Its function is as follows. Component of the proteasome core, a large protease complex with broad specificity involved in protein degradation. This is Proteasome subunit beta 1 from Pyrococcus horikoshii (strain ATCC 700860 / DSM 12428 / JCM 9974 / NBRC 100139 / OT-3).